The primary structure comprises 283 residues: 4-hydroxy-3-methylbut-2-enyl diphosphate reductase (283 aa).

Cysteine 12 serves as a coordination point for [4Fe-4S] cluster. Residues histidine 40 and histidine 73 each coordinate (2E)-4-hydroxy-3-methylbut-2-enyl diphosphate. Dimethylallyl diphosphate is bound by residues histidine 40 and histidine 73. The isopentenyl diphosphate site is built by histidine 40 and histidine 73. A [4Fe-4S] cluster-binding site is contributed by cysteine 95. (2E)-4-hydroxy-3-methylbut-2-enyl diphosphate is bound at residue histidine 123. Histidine 123 contacts dimethylallyl diphosphate. Histidine 123 lines the isopentenyl diphosphate pocket. The active-site Proton donor is the glutamate 125. Threonine 161 is a (2E)-4-hydroxy-3-methylbut-2-enyl diphosphate binding site. A [4Fe-4S] cluster-binding site is contributed by cysteine 189. The (2E)-4-hydroxy-3-methylbut-2-enyl diphosphate site is built by serine 217, asparagine 219, and serine 261. 3 residues coordinate dimethylallyl diphosphate: serine 217, asparagine 219, and serine 261. Isopentenyl diphosphate is bound by residues serine 217, asparagine 219, and serine 261.

The protein belongs to the IspH family. Requires [4Fe-4S] cluster as cofactor.

The enzyme catalyses isopentenyl diphosphate + 2 oxidized [2Fe-2S]-[ferredoxin] + H2O = (2E)-4-hydroxy-3-methylbut-2-enyl diphosphate + 2 reduced [2Fe-2S]-[ferredoxin] + 2 H(+). The catalysed reaction is dimethylallyl diphosphate + 2 oxidized [2Fe-2S]-[ferredoxin] + H2O = (2E)-4-hydroxy-3-methylbut-2-enyl diphosphate + 2 reduced [2Fe-2S]-[ferredoxin] + 2 H(+). It functions in the pathway isoprenoid biosynthesis; dimethylallyl diphosphate biosynthesis; dimethylallyl diphosphate from (2E)-4-hydroxy-3-methylbutenyl diphosphate: step 1/1. Its pathway is isoprenoid biosynthesis; isopentenyl diphosphate biosynthesis via DXP pathway; isopentenyl diphosphate from 1-deoxy-D-xylulose 5-phosphate: step 6/6. In terms of biological role, catalyzes the conversion of 1-hydroxy-2-methyl-2-(E)-butenyl 4-diphosphate (HMBPP) into a mixture of isopentenyl diphosphate (IPP) and dimethylallyl diphosphate (DMAPP). Acts in the terminal step of the DOXP/MEP pathway for isoprenoid precursor biosynthesis. This is 4-hydroxy-3-methylbut-2-enyl diphosphate reductase from Citrifermentans bemidjiense (strain ATCC BAA-1014 / DSM 16622 / JCM 12645 / Bem) (Geobacter bemidjiensis).